We begin with the raw amino-acid sequence, 253 residues long: MSDTEEVEHGEEEYEEEEEVQEEEVHEPAPPPEEKPRIKLTAPKIPEGEKVDFDDIQKKRQNKDLIELQALIDSHFEARRKEEEELVALKERIEKRRAERAEQQRIRAEKEKERQARLAEEKARREEEDAKRKAEDDLKKKKALSSMGASYSSYLAKADQKRGKKQTARETKKKVLAERRKPLNIDHLNEDKLRDKAKELWDWLYQLQTEKYDFTEQIKRKKYEILTLRCRLQELSKFSKKAGAKGKVGGRWK.

Residues 1–25 (MSDTEEVEHGEEEYEEEEEVQEEEV) show a composition bias toward acidic residues. 2 disordered regions span residues 1-58 (MSDT…DIQK) and 97-178 (RAER…VLAE). Ser-2 is subject to N-acetylserine. Basic and acidic residues-rich tracts occupy residues 46–58 (PEGE…DIQK), 97–139 (RAER…DDLK), and 167–178 (TARETKKKVLAE).

It belongs to the troponin T family.

Its function is as follows. Troponin T is the tropomyosin-binding subunit of troponin, the thin filament regulatory complex which confers calcium-sensitivity to striated muscle actomyosin ATPase activity. The chain is Troponin T, fast skeletal muscle isoforms (TNNT3) from Coturnix japonica (Japanese quail).